A 243-amino-acid polypeptide reads, in one-letter code: Ribosomal RNA small subunit methyltransferase E 2 (243 aa).

It belongs to the RNA methyltransferase RsmE family.

The protein localises to the cytoplasm. It carries out the reaction uridine(1498) in 16S rRNA + S-adenosyl-L-methionine = N(3)-methyluridine(1498) in 16S rRNA + S-adenosyl-L-homocysteine + H(+). Its function is as follows. Specifically methylates the N3 position of the uracil ring of uridine 1498 (m3U1498) in 16S rRNA. Acts on the fully assembled 30S ribosomal subunit. In Borreliella burgdorferi (strain ATCC 35210 / DSM 4680 / CIP 102532 / B31) (Borrelia burgdorferi), this protein is Ribosomal RNA small subunit methyltransferase E 2 (rsmE2).